The sequence spans 432 residues: UPF0761 membrane protein Cag_0935 (432 aa).

Helical transmembrane passes span 52–72, 108–128, 148–168, 190–210, 220–240, and 254–274; these read LLSI…FEVF, NIPL…LSTV, FTLY…SLAA, LLAL…YMLV, AFAG…WFLF, and ALSV…VVLV.

This sequence belongs to the UPF0761 family.

It is found in the cell inner membrane. In Chlorobium chlorochromatii (strain CaD3), this protein is UPF0761 membrane protein Cag_0935.